The primary structure comprises 343 residues: MTKDFRENVFQGRSVLAEKDFTAEELEYLIDFGLHLKTLKKNHIPHRYLEGKNIALLFEKSSTRTRSAFTTASIDLGAHPEYLGQNDIQLGKKESTSDTAKVLGSMFDGIEFRGFKQSDAEILARDSGVPVWNGLTDEWHPTQMLADFMTVKENFGKLKGLTLTFMGDGRNNVANSLLVTGAILGVNIHIVAPKELFPTKETQDLAKGFAEKSGAKLLVTDDLAEGMRGSNVVYTDVWVSMGESNWEERVNLLKPYQVNMEALKMTGTPDDELIFMHCLPAFHNVETQYGQDIKEKYGITEMEVTDEVFTSKYARQFEEAENRMHSIKAMMAATLGNLFIPRA.

Carbamoyl phosphate-binding positions include 62 to 65 (STRT), Gln-89, Arg-113, and 140 to 143 (HPTQ). Residues Asn-172, Asp-236, and 240-241 (SM) each bind L-ornithine. Residues 278 to 279 (CL) and Arg-323 contribute to the carbamoyl phosphate site.

Belongs to the aspartate/ornithine carbamoyltransferase superfamily. OTCase family.

Its subcellular location is the cytoplasm. The enzyme catalyses carbamoyl phosphate + L-ornithine = L-citrulline + phosphate + H(+). It participates in amino-acid degradation; L-arginine degradation via ADI pathway; carbamoyl phosphate from L-arginine: step 2/2. Functionally, reversibly catalyzes the transfer of the carbamoyl group from carbamoyl phosphate (CP) to the N(epsilon) atom of ornithine (ORN) to produce L-citrulline. The chain is Ornithine carbamoyltransferase from Levilactobacillus brevis (strain ATCC 367 / BCRC 12310 / CIP 105137 / JCM 1170 / LMG 11437 / NCIMB 947 / NCTC 947) (Lactobacillus brevis).